The sequence spans 491 residues: Probable cytosol aminopeptidase (491 aa).

Mn(2+) contacts are provided by Lys260 and Asp265. Residue Lys272 is part of the active site. Residues Asp284, Asp343, and Glu345 each contribute to the Mn(2+) site. Arg347 is a catalytic residue.

It belongs to the peptidase M17 family. Requires Mn(2+) as cofactor.

Its subcellular location is the cytoplasm. It carries out the reaction Release of an N-terminal amino acid, Xaa-|-Yaa-, in which Xaa is preferably Leu, but may be other amino acids including Pro although not Arg or Lys, and Yaa may be Pro. Amino acid amides and methyl esters are also readily hydrolyzed, but rates on arylamides are exceedingly low.. The catalysed reaction is Release of an N-terminal amino acid, preferentially leucine, but not glutamic or aspartic acids.. Functionally, presumably involved in the processing and regular turnover of intracellular proteins. Catalyzes the removal of unsubstituted N-terminal amino acids from various peptides. The chain is Probable cytosol aminopeptidase from Trichormus variabilis (strain ATCC 29413 / PCC 7937) (Anabaena variabilis).